A 257-amino-acid chain; its full sequence is Small ribosomal subunit protein uS2 (257 aa).

Belongs to the universal ribosomal protein uS2 family.

In Trichlorobacter lovleyi (strain ATCC BAA-1151 / DSM 17278 / SZ) (Geobacter lovleyi), this protein is Small ribosomal subunit protein uS2.